Reading from the N-terminus, the 51-residue chain is Insulin (51 aa).

Intrachain disulfides connect cysteine 8/cysteine 37, cysteine 20/cysteine 50, and cysteine 36/cysteine 41.

The protein belongs to the insulin family. Heterodimer of a B chain and an A chain linked by two disulfide bonds.

It is found in the secreted. Insulin decreases blood glucose concentration. It increases cell permeability to monosaccharides, amino acids and fatty acids. It accelerates glycolysis, the pentose phosphate cycle, and glycogen synthesis in liver. This Pagrus major (Red sea bream) protein is Insulin.